The chain runs to 27 residues: Pregnancy-associated glycoprotein 55 (27 aa).

The protein belongs to the peptidase A1 family. Post-translationally, glycosylated. As to expression, placenta.

This is Pregnancy-associated glycoprotein 55 (PAG55) from Capra hircus (Goat).